The chain runs to 149 residues: MRAVVQRVLKGSVTVNNEVVGKIGQGLVVLLGVGQGDCVDDARYLADKISQLRIFDDEQGKLNLSIQDVKGSILAISQFTLYGDCRKGRRPGYSGAAAPDTARELYESFVQRLVCNGLTTSTGVFQEHMVVEIINDGPVTLLLDSRKGF.

Residues 137 to 138 (GP) carry the Gly-cisPro motif, important for rejection of L-amino acids motif.

The protein belongs to the DTD family. As to quaternary structure, homodimer.

Its subcellular location is the cytoplasm. The enzyme catalyses glycyl-tRNA(Ala) + H2O = tRNA(Ala) + glycine + H(+). It catalyses the reaction a D-aminoacyl-tRNA + H2O = a tRNA + a D-alpha-amino acid + H(+). In terms of biological role, an aminoacyl-tRNA editing enzyme that deacylates mischarged D-aminoacyl-tRNAs. Also deacylates mischarged glycyl-tRNA(Ala), protecting cells against glycine mischarging by AlaRS. Acts via tRNA-based rather than protein-based catalysis; rejects L-amino acids rather than detecting D-amino acids in the active site. By recycling D-aminoacyl-tRNA to D-amino acids and free tRNA molecules, this enzyme counteracts the toxicity associated with the formation of D-aminoacyl-tRNA entities in vivo and helps enforce protein L-homochirality. The polypeptide is D-aminoacyl-tRNA deacylase (Desulforamulus reducens (strain ATCC BAA-1160 / DSM 100696 / MI-1) (Desulfotomaculum reducens)).